The chain runs to 297 residues: Streptogrisin-A (297 aa).

The N-terminal stretch at 1–38 (MTFKRFSPLSSTSRYARLLAVASGLVAAAALATPSAVA) is a signal peptide. A propeptide spanning residues 39–115 (APEAESKATV…VKRAEGKFTP (77 aa)) is cleaved from the precursor. C130 and C150 are joined by a disulfide. Active-site charge relay system residues include H149, D171, and S253. Cysteines 247 and 274 form a disulfide.

It belongs to the peptidase S1 family. As to quaternary structure, monomer.

The enzyme catalyses Hydrolysis of proteins with specificity similar to chymotrypsin.. Has a primary specificity for large aliphatic or aromatic amino acids. This Streptomyces griseus protein is Streptogrisin-A (sprA).